We begin with the raw amino-acid sequence, 711 residues long: 1,4-alpha-glucan-branching enzyme (711 aa).

2 residues coordinate (1,4-alpha-D-glucosyl)n: Trp98 and Lys135. Asp353 (nucleophile) is an active-site residue. Catalysis depends on Glu414, which acts as the Proton donor.

Belongs to the glycosyl hydrolase 13 family. GlgB subfamily.

It is found in the cytoplasm. It catalyses the reaction Transfers a segment of a (1-&gt;4)-alpha-D-glucan chain to a primary hydroxy group in a similar glucan chain.. It participates in glycan biosynthesis; glycogen biosynthesis. Its function is as follows. Glycogen-branching enzyme participates in the glycogen biosynthetic process along with glycogenin and glycogen synthase. Generates alpha-1,6-glucosidic branches from alpha-1,4-linked glucose chains, to increase solubility of the glycogen polymer. The chain is 1,4-alpha-glucan-branching enzyme (GLC3) from Debaryomyces hansenii (strain ATCC 36239 / CBS 767 / BCRC 21394 / JCM 1990 / NBRC 0083 / IGC 2968) (Yeast).